Here is a 522-residue protein sequence, read N- to C-terminus: Peptide methionine sulfoxide reductase MsrA/MsrB (522 aa).

A Thioredoxin domain is found at 17–174 (LALGACSPKI…ALALIRDPNA (158 aa)). Cys-68 and Cys-71 form a disulfide bridge. Residues 199–354 (RTIYLAGGCF…PNGYCHIDIR (156 aa)) form a peptide methionine sulfoxide reductase A region. Residue Cys-207 is part of the active site. Residues 383-506 (DAELKRTLTE…NGASLKFIPL (124 aa)) enclose the MsrB domain. An intrachain disulfide couples Cys-440 to Cys-495. Cys-495 (nucleophile) is an active-site residue.

In the N-terminal section; belongs to the thioredoxin family. The protein in the central section; belongs to the MsrA Met sulfoxide reductase family. It in the C-terminal section; belongs to the MsrB Met sulfoxide reductase family.

It catalyses the reaction L-methionyl-[protein] + [thioredoxin]-disulfide + H2O = L-methionyl-(S)-S-oxide-[protein] + [thioredoxin]-dithiol. The catalysed reaction is [thioredoxin]-disulfide + L-methionine + H2O = L-methionine (S)-S-oxide + [thioredoxin]-dithiol. It carries out the reaction L-methionyl-[protein] + [thioredoxin]-disulfide + H2O = L-methionyl-(R)-S-oxide-[protein] + [thioredoxin]-dithiol. Has an important function as a repair enzyme for proteins that have been inactivated by oxidation. Catalyzes the reversible oxidation-reduction of methionine sulfoxide in proteins to methionine. The protein is Peptide methionine sulfoxide reductase MsrA/MsrB (msrAB) of Neisseria meningitidis serogroup B (strain ATCC BAA-335 / MC58).